The primary structure comprises 273 residues: Holocytochrome c-type synthase (273 aa).

Low complexity predominate over residues 1–18 (MGLSASSPAATAQSAAEP). Positions 1 to 39 (MGLSASSPAATAQSAAEPSKQHQVASPPSECPMHQEKMR) are disordered. HRM repeat units lie at residues 30-35 (ECPMHQ) and 40-45 (GCPMHM).

This sequence belongs to the cytochrome c-type heme lyase family.

It is found in the mitochondrion inner membrane. It carries out the reaction holo-[cytochrome c] = apo-[cytochrome c] + heme b. Lyase that catalyzes the covalent linking of the heme group to the cytochrome C apoprotein to produce the mature functional cytochrome. The sequence is that of Holocytochrome c-type synthase (HCCS) from Gallus gallus (Chicken).